Consider the following 556-residue polypeptide: Endoglucanase 22 (556 aa).

The first 33 residues, 1–33 (MSRGRARLQPPPPGTRTTTLAAVLVLVLLAVVA), serve as a signal peptide directing secretion. The Nucleophile role is filled by Asp-108. Catalysis depends on residues His-450, Asp-502, and Glu-511.

This sequence belongs to the glycosyl hydrolase 9 (cellulase E) family.

It localises to the secreted. The enzyme catalyses Endohydrolysis of (1-&gt;4)-beta-D-glucosidic linkages in cellulose, lichenin and cereal beta-D-glucans.. The polypeptide is Endoglucanase 22 (GLU11) (Oryza sativa subsp. japonica (Rice)).